The sequence spans 338 residues: Flap endonuclease 1 (338 aa).

The N-domain stretch occupies residues 1-98; the sequence is MGTDIGDLLQ…ETLNRRKEVR (98 aa). 7 residues coordinate Mg(2+): aspartate 27, aspartate 80, glutamate 152, glutamate 154, aspartate 173, aspartate 175, and aspartate 236. Residues 116-257 form an I-domain region; the sequence is AAYKYAQASS…TALKLIKKHG (142 aa). The interaction with PCNA stretch occupies residues 330 to 338; that stretch reads RQQTLDQWF.

It belongs to the XPG/RAD2 endonuclease family. FEN1 subfamily. As to quaternary structure, interacts with PCNA. PCNA stimulates the nuclease activity without altering cleavage specificity. It depends on Mg(2+) as a cofactor.

In terms of biological role, structure-specific nuclease with 5'-flap endonuclease and 5'-3' exonuclease activities involved in DNA replication and repair. During DNA replication, cleaves the 5'-overhanging flap structure that is generated by displacement synthesis when DNA polymerase encounters the 5'-end of a downstream Okazaki fragment. Binds the unpaired 3'-DNA end and kinks the DNA to facilitate 5' cleavage specificity. Cleaves one nucleotide into the double-stranded DNA from the junction in flap DNA, leaving a nick for ligation. Also involved in the base excision repair (BER) pathway. Acts as a genome stabilization factor that prevents flaps from equilibrating into structures that lead to duplications and deletions. Also possesses 5'-3' exonuclease activity on nicked or gapped double-stranded DNA. This chain is Flap endonuclease 1, found in Methanosarcina barkeri (strain Fusaro / DSM 804).